The primary structure comprises 932 residues: Chitin synthase regulatory factor 3 (932 aa).

Over residues 1 to 16 (MKDSHSSRRKYEKEKL) the composition is skewed to basic and acidic residues. Disordered regions lie at residues 1 to 53 (MKDS…PTSR), 264 to 356 (TLEE…LQQP), and 374 to 406 (EVPA…NPTV). 3 stretches are compositionally biased toward polar residues: residues 35 to 53 (SGNT…PTSR), 274 to 285 (DSITNTVSNASS), and 308 to 319 (SHFSSTDSNTDS). Residues 337–349 (KSSETLKNPRNDD) show a composition bias toward basic and acidic residues. The residue at position 393 (Ser-393) is a Phosphoserine. Sel1-like repeat units follow at residues 638–674 (PEAL…KKGH), 675–710 (PLSN…EMDV), 711–747 (VEAM…KSKG), 751–788 (VRAM…VYGY), 789–825 (AAAQ…EQDY), 826–863 (GEAE…CKGL), and 864–899 (AKAQ…KQGF). Residues 905–932 (RLEEQALSSKQTHSKAPKKKQQEQCVVM) are disordered.

The chain is Chitin synthase regulatory factor 3 (chr3) from Schizosaccharomyces pombe (strain 972 / ATCC 24843) (Fission yeast).